We begin with the raw amino-acid sequence, 81 residues long: Putative membrane protein insertion efficiency factor (81 aa).

This sequence belongs to the UPF0161 family.

The protein resides in the cell inner membrane. Its function is as follows. Could be involved in insertion of integral membrane proteins into the membrane. The polypeptide is Putative membrane protein insertion efficiency factor (Pseudomonas syringae pv. tomato (strain ATCC BAA-871 / DC3000)).